The following is a 347-amino-acid chain: GMP reductase (347 aa).

Position 108 to 131 (A108 to A131) interacts with NADP(+). The K(+) site is built by G181 and G183. The active-site Thioimidate intermediate is the C186. I216–V239 is an NADP(+) binding site.

It belongs to the IMPDH/GMPR family. GuaC type 1 subfamily. In terms of assembly, homotetramer.

The catalysed reaction is IMP + NH4(+) + NADP(+) = GMP + NADPH + 2 H(+). Catalyzes the irreversible NADPH-dependent deamination of GMP to IMP. It functions in the conversion of nucleobase, nucleoside and nucleotide derivatives of G to A nucleotides, and in maintaining the intracellular balance of A and G nucleotides. This chain is GMP reductase, found in Klebsiella pneumoniae subsp. pneumoniae (strain ATCC 700721 / MGH 78578).